Consider the following 448-residue polypeptide: uncharacterized protein (448 aa).

Lys-280 is modified (N6-(pyridoxal phosphate)lysine).

It belongs to the class-III pyridoxal-phosphate-dependent aminotransferase family.

It localises to the cytoplasm. The protein resides in the mitochondrion. This is an uncharacterized protein from Schizosaccharomyces pombe (strain 972 / ATCC 24843) (Fission yeast).